The chain runs to 522 residues: MTANAYDVIVIGGGISGLSAAKLLVDSGLNPVVLEARSRVGGRTYTVQNKETKWVDLGGAYIGPTQNRILRIAKQYGVKTYKVNEEESLVHYVKGKSYPFKGPFPPMWNPFAYMDYNNLWRTMDKMGMEIPKEAPWRAPHAEEWDKMTMQQLFDKICWTRSARRFATLFVNVNVTSEPHEVSALWFLWYVKQCGGTMRIFSTTNGGQERKFAGGANQISEGMARELGDRVKLSRAVCSIDQTGDLVEVRTVNEEVYKAKYVILAIPPGLNLKIHFNPELPPLRNQLIHRVPMGSVIKCMVYYKENFWRKKGYCGSMVIEEEDAPIGLTLDDTKPDGSVPAIMGFILARKSRKLANLTRDERKRRICEIYARVLGSEEALYPVHYEEKNWCEEEYSGGCYTAYFPPGIMTQFGRVLREPVGRLYFAGTETATEWSGYMEGAVQAGERASREVMCAMGKLHASQIWQSEPESMDVPARPFVTTFWERNLPSVGGFLKFMGVSSFLAAATAAGLVACKKGLLPRC.

The Cytoplasmic segment spans residues 1–492 (MTANAYDVIV…WERNLPSVGG (492 aa)). Cys-398 is modified (S-8alpha-FAD cysteine). Residues 493-513 (FLKFMGVSSFLAAATAAGLVA) traverse the membrane as a helical; Anchor for type IV membrane protein segment. Over 514–522 (CKKGLLPRC) the chain is Mitochondrial intermembrane.

This sequence belongs to the flavin monoamine oxidase family. In terms of assembly, monomer, homo- or heterodimer (containing two subunits of similar size). Each subunit contains a covalently bound flavin. Enzymatically active as monomer. It depends on FAD as a cofactor. As to expression, strongest expression in brain and intestine, followed by liver, heart and gill. Little expression in spleen, eye or muscle. In brain, highest activity in noradrenergic and serotonergic cell groups and those of the habenulointerpeduncular pathway; moderate levels in dopaminergic cell clusters.

Its subcellular location is the mitochondrion outer membrane. The catalysed reaction is a secondary aliphatic amine + O2 + H2O = a primary amine + an aldehyde + H2O2. The enzyme catalyses a primary methyl amine + O2 + H2O = an aldehyde + H2O2 + NH4(+). It carries out the reaction serotonin + O2 + H2O = (5-hydroxyindol-3-yl)acetaldehyde + H2O2 + NH4(+). It catalyses the reaction 2-phenylethylamine + O2 + H2O = 2-phenylacetaldehyde + H2O2 + NH4(+). The catalysed reaction is tyramine + O2 + H2O = (4-hydroxyphenyl)acetaldehyde + H2O2 + NH4(+). The enzyme catalyses dopamine + O2 + H2O = 3,4-dihydroxyphenylacetaldehyde + H2O2 + NH4(+). It carries out the reaction (R)-adrenaline + O2 + H2O = (R)-3,4-dihydroxymandelaldehyde + methylamine + H2O2. It catalyses the reaction (R)-noradrenaline + O2 + H2O = (R)-3,4-dihydroxymandelaldehyde + H2O2 + NH4(+). The catalysed reaction is kynuramine + O2 + H2O = 3-(2-aminophenyl)-3-oxopropanal + H2O2 + NH4(+). The enzyme catalyses tryptamine + O2 + H2O = indole-3-acetaldehyde + H2O2 + NH4(+). Its activity is regulated as follows. Inhibited by both clorgyline (selective MAOA inhibitor) and deprenyl (selective MAOB inhibitor). In terms of biological role, catalyzes the oxidative deamination of biogenic and xenobiotic amines and has important functions in the metabolism of neuroactive and vasoactive amines in the central nervous system and peripheral tissues. Preferentially oxidizes serotonin and tyramine. Also catalyzes the oxidative deamination of kynuramine to 3-(2-aminophenyl)-3-oxopropanal that can spontaneously condense to 4-hydroxyquinoline. In Danio rerio (Zebrafish), this protein is Amine oxidase [flavin-containing].